The following is a 547-amino-acid chain: Glucose-6-phosphate isomerase (547 aa).

The active-site Proton donor is the glutamate 354. Catalysis depends on residues histidine 385 and lysine 513.

The protein belongs to the GPI family.

It localises to the cytoplasm. The catalysed reaction is alpha-D-glucose 6-phosphate = beta-D-fructose 6-phosphate. Its pathway is carbohydrate biosynthesis; gluconeogenesis. It functions in the pathway carbohydrate degradation; glycolysis; D-glyceraldehyde 3-phosphate and glycerone phosphate from D-glucose: step 2/4. In terms of biological role, catalyzes the reversible isomerization of glucose-6-phosphate to fructose-6-phosphate. The protein is Glucose-6-phosphate isomerase of Erwinia tasmaniensis (strain DSM 17950 / CFBP 7177 / CIP 109463 / NCPPB 4357 / Et1/99).